The sequence spans 542 residues: Protein MGF 505-11L (542 aa).

It belongs to the asfivirus MGF 505 family.

Its function is as follows. Plays a role in virus cell tropism, and may be required for efficient virus replication in macrophages. The protein is Protein MGF 505-11L of African swine fever virus (isolate Pig/Kenya/KEN-50/1950) (ASFV).